A 349-amino-acid chain; its full sequence is Aspartate carbamoyltransferase catalytic subunit (349 aa).

Carbamoyl phosphate-binding residues include Arg-59 and Thr-60. Lys-87 contacts L-aspartate. Positions 109, 142, and 145 each coordinate carbamoyl phosphate. Arg-182 and Arg-253 together coordinate L-aspartate. Carbamoyl phosphate-binding residues include Gly-294 and Pro-295.

This sequence belongs to the aspartate/ornithine carbamoyltransferase superfamily. ATCase family. In terms of assembly, heterododecamer (2C3:3R2) of six catalytic PyrB chains organized as two trimers (C3), and six regulatory PyrI chains organized as three dimers (R2).

The enzyme catalyses carbamoyl phosphate + L-aspartate = N-carbamoyl-L-aspartate + phosphate + H(+). It functions in the pathway pyrimidine metabolism; UMP biosynthesis via de novo pathway; (S)-dihydroorotate from bicarbonate: step 2/3. Catalyzes the condensation of carbamoyl phosphate and aspartate to form carbamoyl aspartate and inorganic phosphate, the committed step in the de novo pyrimidine nucleotide biosynthesis pathway. The sequence is that of Aspartate carbamoyltransferase catalytic subunit from Synechococcus sp. (strain CC9311).